A 60-amino-acid chain; its full sequence is Large ribosomal subunit protein uL30 (60 aa).

Belongs to the universal ribosomal protein uL30 family. Part of the 50S ribosomal subunit.

This chain is Large ribosomal subunit protein uL30, found in Clavibacter michiganensis subsp. michiganensis (strain NCPPB 382).